The sequence spans 474 residues: Pyruvate kinase (474 aa).

Position 33 (Arg-33) interacts with substrate. K(+) contacts are provided by Asn-35, Ser-37, and Asp-67. Residue 35–38 (NFSH) coordinates ATP. The ATP site is built by Arg-74 and Lys-155. Glu-220 provides a ligand contact to Mg(2+). Substrate contacts are provided by Gly-243, Asp-244, and Thr-276. Asp-244 contributes to the Mg(2+) binding site.

It belongs to the pyruvate kinase family. As to quaternary structure, homotetramer. Mg(2+) is required as a cofactor. It depends on K(+) as a cofactor.

The catalysed reaction is pyruvate + ATP = phosphoenolpyruvate + ADP + H(+). The protein operates within carbohydrate degradation; glycolysis; pyruvate from D-glyceraldehyde 3-phosphate: step 5/5. This Corynebacterium efficiens (strain DSM 44549 / YS-314 / AJ 12310 / JCM 11189 / NBRC 100395) protein is Pyruvate kinase (pyk).